An 848-amino-acid chain; its full sequence is MNHDSFSSLKFRRPSSKLHKDPPSIGSRMLKSQQSNTSLKRHPSAPVYPRSSASRSREHSRTRSNAYGSSTSSLDQNSGGPSPVLANNESGYFSGNHNTTKSRPPHSGRFSLNDQSSDELIGSPFDSRGMLSALQENTAESDRQPIQKPPTLRSQTTPDTRGLRQSASFTALHNRMDALVNRTDSDRSTNTKRYSDEGNGTKPVGRSKKASFSSFVNSMLGSPRGIKISAPENPVHVTHVGYDNQTGQFTGLPKEWQRLLQESGISKKEQEEHPQTMVDIMRFYEKNAQGDDEVWHKFDHAYAHHHPVTTSSSQPSSGGSTPYGTVGQRASSPTSPRFPQNHEGSFENPRAPPPIPRGAPAATQAMSPPVGGLVPNRAPPRPPAAANMTPARPAPQPPTTASYATTRPVQDPWPQFGTIPENAQPFGTPPIPESEPLPSGPQLSRSNSKANGATAPWVSPAVTPSPTQYQQQQEQAMATAQQAIASKQLDRSQSLRQQQAQQPKQKQATHPTPQQVSPVEDPSAALQQSARAVPAARPRQRARQSNAMDIRSRLVAICTPGDPTKMYYNLNKIGQGASGGVFTAYHNGTGSCVAIKQMNLDLQPKKDLIINEIIVMKDSKHKNIVNFLDSYLHGLDLWVVMEYMEGGSLTDVVTFNIMSEGQIAAVCRETLNGLQHLHSKGVIHRDIKSDNILLSLDGNIKLTDFGFCAQINDSHNKRNTMVGTPYWMAPEVVTRKEYGRKVDIWSLGIMAIEMIEGEPPYLTESPLRALYLIATNGTPTIKDEQSLTPVFRDFLHLALKVDPEKRASAHDLLKHPFMSFCAPLSHLAPLVKAARLSRAQEKAQKGGH.

A disordered region spans residues 1–208 (MNHDSFSSLK…NGTKPVGRSK (208 aa)). 2 stretches are compositionally biased toward polar residues: residues 65-102 (NAYG…TTKS) and 152-171 (LRSQ…SFTA). Basic and acidic residues predominate over residues 183–196 (TDSDRSTNTKRYSD). Residues 228–241 (ISAPENPVHVTHVG) form the CRIB domain. Residues 306–547 (HPVTTSSSQP…PRQRARQSNA (242 aa)) are disordered. Residues 308–327 (VTTSSSQPSSGGSTPYGTVG) show a composition bias toward low complexity. A compositionally biased stretch (polar residues) spans 328 to 338 (QRASSPTSPRF). Residues 427–439 (GTPPIPESEPLPS) show a composition bias toward pro residues. A compositionally biased stretch (polar residues) spans 441 to 451 (PQLSRSNSKAN). Composition is skewed to low complexity over residues 468 to 515 (QYQQ…TPQQ) and 527 to 537 (QQSARAVPAAR). Positions 567–818 (YYNLNKIGQG…AHDLLKHPFM (252 aa)) constitute a Protein kinase domain. ATP-binding positions include 573-581 (IGQGASGGV) and Lys-596. Asp-686 (proton acceptor) is an active-site residue.

It belongs to the protein kinase superfamily. STE Ser/Thr protein kinase family. STE20 subfamily.

It is found in the cytoplasm. It localises to the nucleus. The catalysed reaction is L-seryl-[protein] + ATP = O-phospho-L-seryl-[protein] + ADP + H(+). It catalyses the reaction L-threonyl-[protein] + ATP = O-phospho-L-threonyl-[protein] + ADP + H(+). Its function is as follows. MAP4K component of the MAPK pathway required for the mating pheromone response and the regulation of cell polarity and cell cycle. In Aspergillus oryzae (strain ATCC 42149 / RIB 40) (Yellow koji mold), this protein is Serine/threonine-protein kinase ste20 (ste20).